The sequence spans 419 residues: Adenylosuccinate synthetase (419 aa).

Residues 15 to 21 and 43 to 45 contribute to the GTP site; these read GDEGKGK and GHT. Catalysis depends on D16, which acts as the Proton acceptor. The Mg(2+) site is built by D16 and G43. IMP is bound by residues 16-19, 41-44, T128, R142, Q223, T238, and R302; these read DEGK and NAGH. H44 functions as the Proton donor in the catalytic mechanism. Residue 298–304 participates in substrate binding; the sequence is TTTGRAR. Residues R304, 330 to 332, and 408 to 410 contribute to the GTP site; these read KLD and STS.

It belongs to the adenylosuccinate synthetase family. In terms of assembly, homodimer. Mg(2+) serves as cofactor.

The protein resides in the cytoplasm. The enzyme catalyses IMP + L-aspartate + GTP = N(6)-(1,2-dicarboxyethyl)-AMP + GDP + phosphate + 2 H(+). The protein operates within purine metabolism; AMP biosynthesis via de novo pathway; AMP from IMP: step 1/2. Plays an important role in the de novo pathway of purine nucleotide biosynthesis. Catalyzes the first committed step in the biosynthesis of AMP from IMP. The polypeptide is Adenylosuccinate synthetase (Sulfurimonas denitrificans (strain ATCC 33889 / DSM 1251) (Thiomicrospira denitrificans (strain ATCC 33889 / DSM 1251))).